Reading from the N-terminus, the 238-residue chain is HTH-type transcriptional regulator TreR (238 aa).

The HTH gntR-type domain occupies 1 to 71 (MKVNKFITIY…RGKGSVVLNR (71 aa)). The H-T-H motif DNA-binding region spans 31–50 (EHELTAQYGTSRETVRKALH).

As to quaternary structure, dimer of dimers.

In terms of biological role, repressor for the trePA operon. It is able to bind trehalose-6-phosphate. In Bacillus subtilis (strain 168), this protein is HTH-type transcriptional regulator TreR (treR).